The following is a 313-amino-acid chain: Ribosomal RNA small subunit methyltransferase H (313 aa).

Residues 35 to 37 (GGH), Asp-55, Phe-80, Asp-102, and Gln-109 each bind S-adenosyl-L-methionine.

The protein belongs to the methyltransferase superfamily. RsmH family.

It localises to the cytoplasm. It carries out the reaction cytidine(1402) in 16S rRNA + S-adenosyl-L-methionine = N(4)-methylcytidine(1402) in 16S rRNA + S-adenosyl-L-homocysteine + H(+). In terms of biological role, specifically methylates the N4 position of cytidine in position 1402 (C1402) of 16S rRNA. The sequence is that of Ribosomal RNA small subunit methyltransferase H from Shewanella baltica (strain OS223).